A 139-amino-acid polypeptide reads, in one-letter code: ATP synthase epsilon chain (139 aa).

This sequence belongs to the ATPase epsilon chain family. In terms of assembly, F-type ATPases have 2 components, CF(1) - the catalytic core - and CF(0) - the membrane proton channel. CF(1) has five subunits: alpha(3), beta(3), gamma(1), delta(1), epsilon(1). CF(0) has three main subunits: a, b and c.

It localises to the cell membrane. Produces ATP from ADP in the presence of a proton gradient across the membrane. In Pediococcus pentosaceus (strain ATCC 25745 / CCUG 21536 / LMG 10740 / 183-1w), this protein is ATP synthase epsilon chain.